The chain runs to 183 residues: UPF0398 protein PEPE_0933 (183 aa).

This sequence belongs to the UPF0398 family.

The sequence is that of UPF0398 protein PEPE_0933 from Pediococcus pentosaceus (strain ATCC 25745 / CCUG 21536 / LMG 10740 / 183-1w).